A 104-amino-acid polypeptide reads, in one-letter code: Large ribosomal subunit protein uL23 (104 aa).

It belongs to the universal ribosomal protein uL23 family. In terms of assembly, part of the 50S ribosomal subunit. Contacts protein L29, and trigger factor when it is bound to the ribosome.

Its function is as follows. One of the early assembly proteins it binds 23S rRNA. One of the proteins that surrounds the polypeptide exit tunnel on the outside of the ribosome. Forms the main docking site for trigger factor binding to the ribosome. This is Large ribosomal subunit protein uL23 from Ralstonia pickettii (strain 12J).